The sequence spans 149 residues: Nucleoside diphosphate kinase (149 aa).

The ATP site is built by lysine 9, phenylalanine 57, arginine 85, threonine 91, arginine 102, and asparagine 112. Histidine 115 (pros-phosphohistidine intermediate) is an active-site residue.

This sequence belongs to the NDK family. As to quaternary structure, homotetramer. It depends on Mg(2+) as a cofactor.

It localises to the cytoplasm. The catalysed reaction is a 2'-deoxyribonucleoside 5'-diphosphate + ATP = a 2'-deoxyribonucleoside 5'-triphosphate + ADP. It catalyses the reaction a ribonucleoside 5'-diphosphate + ATP = a ribonucleoside 5'-triphosphate + ADP. Its function is as follows. Major role in the synthesis of nucleoside triphosphates other than ATP. The ATP gamma phosphate is transferred to the NDP beta phosphate via a ping-pong mechanism, using a phosphorylated active-site intermediate. This Staphylococcus aureus (strain MSSA476) protein is Nucleoside diphosphate kinase.